The following is a 137-amino-acid chain: MPTINQLVTKGRKRKASKTKSPALNQSYNSLHKKYKKLSAPFKRGVCTRVATMTPKKPNSALRKYARVKLSNGMEVTAYIPGEGHNLQEHSVVLIKGASVKDLPGVRYSIIRGTQDAAGVNKRNQARSRYGAKKAKK.

Positions M1–Q26 are disordered.

It belongs to the universal ribosomal protein uS12 family. As to quaternary structure, part of the 30S ribosomal subunit. Contacts proteins S8 and S17. May interact with IF1 in the 30S initiation complex.

Its function is as follows. With S4 and S5 plays an important role in translational accuracy. Functionally, interacts with and stabilizes bases of the 16S rRNA that are involved in tRNA selection in the A site and with the mRNA backbone. Located at the interface of the 30S and 50S subunits, it traverses the body of the 30S subunit contacting proteins on the other side and probably holding the rRNA structure together. The combined cluster of proteins S8, S12 and S17 appears to hold together the shoulder and platform of the 30S subunit. In Mycoplasmopsis pulmonis (strain UAB CTIP) (Mycoplasma pulmonis), this protein is Small ribosomal subunit protein uS12.